We begin with the raw amino-acid sequence, 199 residues long: Small ribosomal subunit protein uS14m (199 aa).

Residues 28-67 are disordered; that stretch reads LSTPAPEPAKPSSEETTESTEPATSVEDAGEPMKEKRITQ.

The protein belongs to the universal ribosomal protein uS14 family. As to quaternary structure, component of the mitochondrial ribosome small subunit (28S) which comprises a 12S rRNA and about 30 distinct proteins. Interacts with LIAT1.

It localises to the mitochondrion. The sequence is that of Small ribosomal subunit protein uS14m (mrps-14) from Caenorhabditis elegans.